The sequence spans 143 residues: Large-conductance mechanosensitive channel (143 aa).

The next 2 helical transmembrane spans lie at 10 to 30 (FAVKGNVMDLAVGVIIGGAFS) and 89 to 109 (GSFITVAINFVILAFIIFLMV).

Belongs to the MscL family. As to quaternary structure, homopentamer.

It is found in the cell inner membrane. Functionally, channel that opens in response to stretch forces in the membrane lipid bilayer. May participate in the regulation of osmotic pressure changes within the cell. The chain is Large-conductance mechanosensitive channel from Burkholderia vietnamiensis (strain G4 / LMG 22486) (Burkholderia cepacia (strain R1808)).